A 1151-amino-acid polypeptide reads, in one-letter code: PPi-type phosphoenolpyruvate carboxykinase 1 (1151 aa).

The stretch at 1083 to 1129 (RQKLEVAKLNKDLAYLNKTIAEKPRLAETLNKQIAAVKEELQYVSSE) forms a coiled coil.

It belongs to the PPi-type phosphoenolpyruvate carboxykinase family. As to quaternary structure, monomer and trimer; forms heterotrimers with PEPCK2 and PEPCK3.

The protein localises to the cytoplasm. Its subcellular location is the cytosol. It carries out the reaction oxaloacetate + diphosphate = phosphoenolpyruvate + phosphate + CO2. In terms of biological role, inorganic pyrophosphate (PPi)-dependent phosphoenolpyruvate carboxykinase, which regulates the carbon flow of the central metabolism by fixing CO(2) to phosphoenolpyruvate to produce oxaloacetate. Can also produce pyruvate and diphosphate from phosphoenolpyruvate and phosphate. The polypeptide is PPi-type phosphoenolpyruvate carboxykinase 1 (Entamoeba histolytica (strain ATCC 30459 / HM-1:IMSS / ABRM)).